We begin with the raw amino-acid sequence, 713 residues long: uncharacterized protein (713 aa).

A helical membrane pass occupies residues 686-706 (VWKFNPALYSTITNIFLLIIF).

This sequence belongs to the plectrovirus ORF1 family.

The protein localises to the host membrane. This is an uncharacterized protein from Spiroplasma melliferum (SpV1).